Reading from the N-terminus, the 873-residue chain is Alanine--tRNA ligase (873 aa).

Zn(2+) is bound by residues His-559, His-563, Cys-661, and His-665.

Belongs to the class-II aminoacyl-tRNA synthetase family. The cofactor is Zn(2+).

The protein localises to the cytoplasm. The catalysed reaction is tRNA(Ala) + L-alanine + ATP = L-alanyl-tRNA(Ala) + AMP + diphosphate. Catalyzes the attachment of alanine to tRNA(Ala) in a two-step reaction: alanine is first activated by ATP to form Ala-AMP and then transferred to the acceptor end of tRNA(Ala). Also edits incorrectly charged Ser-tRNA(Ala) and Gly-tRNA(Ala) via its editing domain. The sequence is that of Alanine--tRNA ligase from Acaryochloris marina (strain MBIC 11017).